Reading from the N-terminus, the 208-residue chain is Mediator of RNA polymerase II transcription subunit 18 (208 aa).

Phosphoserine is present on Ser-66.

Belongs to the Mediator complex subunit 18 family. As to quaternary structure, component of the Mediator complex, which is composed of MED1, MED4, MED6, MED7, MED8, MED9, MED10, MED11, MED12, MED13, MED13L, MED14, MED15, MED16, MED17, MED18, MED19, MED20, MED21, MED22, MED23, MED24, MED25, MED26, MED27, MED29, MED30, MED31, CCNC, CDK8 and CDC2L6/CDK11. The MED12, MED13, CCNC and CDK8 subunits form a distinct module termed the CDK8 module. Mediator containing the CDK8 module is less active than Mediator lacking this module in supporting transcriptional activation. Individual preparations of the Mediator complex lacking one or more distinct subunits have been variously termed ARC, CRSP, DRIP, PC2, SMCC and TRAP.

It is found in the nucleus. Its function is as follows. Component of the Mediator complex, a coactivator involved in the regulated transcription of nearly all RNA polymerase II-dependent genes. Mediator functions as a bridge to convey information from gene-specific regulatory proteins to the basal RNA polymerase II transcription machinery. Mediator is recruited to promoters by direct interactions with regulatory proteins and serves as a scaffold for the assembly of a functional preinitiation complex with RNA polymerase II and the general transcription factors. The protein is Mediator of RNA polymerase II transcription subunit 18 (MED18) of Homo sapiens (Human).